A 612-amino-acid polypeptide reads, in one-letter code: Threonine--tRNA ligase (612 aa).

A catalytic region spans residues 218–509 (DHRKLGVELG…LSEHFGGNFP (292 aa)). 3 residues coordinate Zn(2+): Cys310, His361, and His486.

Belongs to the class-II aminoacyl-tRNA synthetase family. As to quaternary structure, homodimer. Zn(2+) is required as a cofactor.

It is found in the cytoplasm. It catalyses the reaction tRNA(Thr) + L-threonine + ATP = L-threonyl-tRNA(Thr) + AMP + diphosphate + H(+). Its function is as follows. Catalyzes the attachment of threonine to tRNA(Thr) in a two-step reaction: L-threonine is first activated by ATP to form Thr-AMP and then transferred to the acceptor end of tRNA(Thr). Also edits incorrectly charged L-seryl-tRNA(Thr). This chain is Threonine--tRNA ligase, found in Helicobacter pylori (strain G27).